The sequence spans 465 residues: Spermidine/putrescine import ATP-binding protein PotA (465 aa).

Positions 1 to 18 (MTATSGARTSDARTSGAR) are enriched in polar residues. Residues 1–21 (MTATSGARTSDARTSGARTSD) are disordered. In terms of domain architecture, ABC transporter spans 30-264 (IELVGVAKDY…PRTRFVAGFI (235 aa)). 66 to 73 (GPSGCGKS) contacts ATP.

Belongs to the ABC transporter superfamily. Spermidine/putrescine importer (TC 3.A.1.11.1) family. In terms of assembly, the complex is composed of two ATP-binding proteins (PotA), two transmembrane proteins (PotB and PotC) and a solute-binding protein (PotD).

It is found in the cell membrane. It carries out the reaction ATP + H2O + polyamine-[polyamine-binding protein]Side 1 = ADP + phosphate + polyamineSide 2 + [polyamine-binding protein]Side 1.. In terms of biological role, part of the ABC transporter complex PotABCD involved in spermidine/putrescine import. Responsible for energy coupling to the transport system. In Frankia alni (strain DSM 45986 / CECT 9034 / ACN14a), this protein is Spermidine/putrescine import ATP-binding protein PotA.